The following is an 83-amino-acid chain: Cytochrome b559 subunit alpha (83 aa).

Residues 21-35 (IIHTITVPMLFLAGW) form a helical membrane-spanning segment. Histidine 23 provides a ligand contact to heme.

Belongs to the PsbE/PsbF family. In terms of assembly, heterodimer of an alpha subunit and a beta subunit. PSII is composed of 1 copy each of membrane proteins PsbA, PsbB, PsbC, PsbD, PsbE, PsbF, PsbH, PsbI, PsbJ, PsbK, PsbL, PsbM, PsbT, PsbX, PsbY, PsbZ, Psb30/Ycf12, peripheral proteins PsbO, CyanoQ (PsbQ), PsbU, PsbV and a large number of cofactors. It forms dimeric complexes. Heme b serves as cofactor.

The protein localises to the cellular thylakoid membrane. Functionally, this b-type cytochrome is tightly associated with the reaction center of photosystem II (PSII). PSII is a light-driven water:plastoquinone oxidoreductase that uses light energy to abstract electrons from H(2)O, generating O(2) and a proton gradient subsequently used for ATP formation. It consists of a core antenna complex that captures photons, and an electron transfer chain that converts photonic excitation into a charge separation. The protein is Cytochrome b559 subunit alpha of Acaryochloris marina (strain MBIC 11017).